The chain runs to 229 residues: APDDDDKIVGGYECPKHAAPWTVSLNVGYHFCGGSLIAPGWVVSAAHCYQRRIQVRLGEHDISANEGDETYIDSSMVIRHPNYSGYDLDNDIMLIKLSKPAALNRNVDLISLPTGCAYAGEMCLISGWGNTMDGAVSGDQLQCLDAPVLSDAECKGAYPGMITNNMMCVGYMEGGKDSCQGDSGGPVVCNGMLQGIVSWGYGCAERDHPGVYTRVCHYVSWIHETIASV.

Residues 1-7 (APDDDDK) constitute a propeptide, activation peptide. In terms of domain architecture, Peptidase S1 spans 8-227 (IVGGYECPKH…YVSWIHETIA (220 aa)). Disulfide bonds link Cys14-Cys143, Cys32-Cys48, Cys116-Cys216, Cys123-Cys189, Cys154-Cys168, and Cys179-Cys203. Catalysis depends on His47, which acts as the Charge relay system. Ca(2+) is bound by residues Glu59 and Glu69. Catalysis depends on Asp91, which acts as the Charge relay system. The active-site Charge relay system is the Ser183.

The protein belongs to the peptidase S1 family. Ca(2+) serves as cofactor.

It localises to the secreted. The protein localises to the extracellular space. The enzyme catalyses Preferential cleavage: Arg-|-Xaa, Lys-|-Xaa.. The chain is Trypsin from Squalus acanthias (Spiny dogfish).